The primary structure comprises 388 residues: Probable fatty acid desaturase DES1 (388 aa).

The tract at residues 1–33 (MATTPMTVVDHEAEEAVAKAREDDKSRQVDAFD) is disordered. Over residues 9 to 30 (VDHEAEEAVAKAREDDKSRQVD) the composition is skewed to basic and acidic residues. The next 2 membrane-spanning stretches (helical) occupy residues 62 to 82 (LWYV…AAAM) and 85 to 105 (WAVW…FFVL). The Histidine box-1 signature appears at 107–111 (HDCGH). A helical transmembrane segment spans residues 119 to 139 (TLNSVVGHLLHSFILIPYHGW). A Histidine box-2 motif is present at residues 143 to 147 (HRTHH). Transmembrane regions (helical) follow at residues 177–194 (IRFT…YLFY), 226–246 (WCIM…LQVL), and 248–268 (MYGL…YLHH). Positions 310-314 (HVIHH) match the Histidine box-3 motif.

The protein belongs to the fatty acid desaturase type 1 family. As to expression, highly expressed in root hair cells. Barely detected in panicle, shoot apex, stems and leaves.

Its subcellular location is the membrane. The protein operates within lipid metabolism; polyunsaturated fatty acid biosynthesis. The sequence is that of Probable fatty acid desaturase DES1 from Sorghum bicolor (Sorghum).